Consider the following 467-residue polypeptide: 3-isopropylmalate dehydratase large subunit (467 aa).

Residues C347, C407, and C410 each coordinate [4Fe-4S] cluster.

This sequence belongs to the aconitase/IPM isomerase family. LeuC type 1 subfamily. As to quaternary structure, heterodimer of LeuC and LeuD. [4Fe-4S] cluster is required as a cofactor.

It carries out the reaction (2R,3S)-3-isopropylmalate = (2S)-2-isopropylmalate. It participates in amino-acid biosynthesis; L-leucine biosynthesis; L-leucine from 3-methyl-2-oxobutanoate: step 2/4. Functionally, catalyzes the isomerization between 2-isopropylmalate and 3-isopropylmalate, via the formation of 2-isopropylmaleate. This Picosynechococcus sp. (strain ATCC 27264 / PCC 7002 / PR-6) (Agmenellum quadruplicatum) protein is 3-isopropylmalate dehydratase large subunit.